The following is a 495-amino-acid chain: Ectonucleoside triphosphate diphosphohydrolase 2 (495 aa).

Residues 1–7 (MAGKVRS) are Cytoplasmic-facing. Residues 8 to 28 (LLPPLLLAAAGLAGLLLLCVP) traverse the membrane as a helical segment. Residues 29–462 (TRDVREPPAL…PGLRKGTDFS (434 aa)) are Extracellular-facing. N-linked (GlcNAc...) asparagine glycosylation occurs at N64. C75 and C99 are joined by a disulfide. Residue N129 is glycosylated (N-linked (GlcNAc...) asparagine). E165 acts as the Proton acceptor in catalysis. 204–208 (GASTQ) contacts ATP. Cystine bridges form between C242-C284, C265-C310, C323-C328, and C377-C399. N294 is a glycosylation site (N-linked (GlcNAc...) asparagine). N378 and N443 each carry an N-linked (GlcNAc...) asparagine glycan. The helical transmembrane segment at 463 to 483 (SWVVLLLLFASALLAALVLLL) threads the bilayer. The Cytoplasmic segment spans residues 484–495 (RQVHSAKLPSTI).

Belongs to the GDA1/CD39 NTPase family. It depends on Ca(2+) as a cofactor. Requires Mg(2+) as cofactor. As to expression, brain, placenta, skeletal muscle, kidney, pancreas, heart, ovary, testis, colon, small intestine, prostate and pancreas. No expression in adult thymus, spleen, lung, liver and peripheral blood leukocytes.

Its subcellular location is the cell membrane. It is found in the endoplasmic reticulum membrane. Its function is as follows. In the nervous system, could hydrolyze ATP and other nucleotides to regulate purinergic neurotransmission. Hydrolyzes ADP only to a marginal extent. The order of activity with different substrates is ATP &gt; GTP &gt; CTP = ITP &gt; UTP &gt;&gt; ADP = UDP. In Homo sapiens (Human), this protein is Ectonucleoside triphosphate diphosphohydrolase 2 (ENTPD2).